The primary structure comprises 305 residues: Ribosomal RNA small subunit methyltransferase H (305 aa).

Residues Gly47 to His49, Asp66, Phe93, Asp108, and Gln115 contribute to the S-adenosyl-L-methionine site. A disordered region spans residues Ala280–Ser305. Positions Arg290–Ser305 are enriched in basic residues.

This sequence belongs to the methyltransferase superfamily. RsmH family.

The protein resides in the cytoplasm. It carries out the reaction cytidine(1402) in 16S rRNA + S-adenosyl-L-methionine = N(4)-methylcytidine(1402) in 16S rRNA + S-adenosyl-L-homocysteine + H(+). Specifically methylates the N4 position of cytidine in position 1402 (C1402) of 16S rRNA. In Synechococcus sp. (strain WH7803), this protein is Ribosomal RNA small subunit methyltransferase H.